A 145-amino-acid polypeptide reads, in one-letter code: D-aminoacyl-tRNA deacylase (145 aa).

The Gly-cisPro motif, important for rejection of L-amino acids signature appears at 137–138; the sequence is GP.

This sequence belongs to the DTD family. Homodimer.

It localises to the cytoplasm. The enzyme catalyses glycyl-tRNA(Ala) + H2O = tRNA(Ala) + glycine + H(+). The catalysed reaction is a D-aminoacyl-tRNA + H2O = a tRNA + a D-alpha-amino acid + H(+). An aminoacyl-tRNA editing enzyme that deacylates mischarged D-aminoacyl-tRNAs. Also deacylates mischarged glycyl-tRNA(Ala), protecting cells against glycine mischarging by AlaRS. Acts via tRNA-based rather than protein-based catalysis; rejects L-amino acids rather than detecting D-amino acids in the active site. By recycling D-aminoacyl-tRNA to D-amino acids and free tRNA molecules, this enzyme counteracts the toxicity associated with the formation of D-aminoacyl-tRNA entities in vivo and helps enforce protein L-homochirality. The polypeptide is D-aminoacyl-tRNA deacylase (Dichelobacter nodosus (strain VCS1703A)).